The sequence spans 442 residues: UPF0597 protein HRM2_02820 (442 aa).

It belongs to the UPF0597 family.

The chain is UPF0597 protein HRM2_02820 from Desulforapulum autotrophicum (strain ATCC 43914 / DSM 3382 / VKM B-1955 / HRM2) (Desulfobacterium autotrophicum).